The following is a 333-amino-acid chain: Mitochondrial thiamine pyrophosphate carrier 1 (333 aa).

Solcar repeat units lie at residues 12–115 (GSRL…ITQF), 129–215 (PPSV…LRPR), and 222–318 (PYSS…ALKL). Helical transmembrane passes span 17–35 (VTAA…IAPL), 96–112 (LLYV…YRSI), 135–155 (FIAG…LDLL), 190–209 (GLGP…FCVY), 221–238 (LPYS…SVMA), and 293–310 (GLTV…VTMW).

It belongs to the mitochondrial carrier (TC 2.A.29) family.

The protein resides in the mitochondrion inner membrane. Functionally, mitochondrial transporter that mediates uptake of thiamine pyrophosphate (ThPP) into mitochondria. This chain is Mitochondrial thiamine pyrophosphate carrier 1 (tpc-1), found in Neurospora crassa (strain ATCC 24698 / 74-OR23-1A / CBS 708.71 / DSM 1257 / FGSC 987).